We begin with the raw amino-acid sequence, 466 residues long: Asparagine--tRNA ligase (466 aa).

This sequence belongs to the class-II aminoacyl-tRNA synthetase family. As to quaternary structure, homodimer.

Its subcellular location is the cytoplasm. The catalysed reaction is tRNA(Asn) + L-asparagine + ATP = L-asparaginyl-tRNA(Asn) + AMP + diphosphate + H(+). The chain is Asparagine--tRNA ligase from Shigella dysenteriae serotype 1 (strain Sd197).